The chain runs to 92 residues: Small ribosomal subunit protein uS19 (92 aa).

This sequence belongs to the universal ribosomal protein uS19 family.

In terms of biological role, protein S19 forms a complex with S13 that binds strongly to the 16S ribosomal RNA. This Cereibacter sphaeroides (strain ATCC 17029 / ATH 2.4.9) (Rhodobacter sphaeroides) protein is Small ribosomal subunit protein uS19.